Reading from the N-terminus, the 245-residue chain is Ribonuclease 3 (245 aa).

In terms of domain architecture, RNase III spans 19–148 (FKVFQEKIGI…FIGALYLDQG (130 aa)). A Mg(2+)-binding site is contributed by Glu-61. Residue Asp-65 is part of the active site. The Mg(2+) site is built by Asp-134 and Glu-137. Glu-137 is an active-site residue. The DRBM domain maps to 174–243 (DYKSQLQELI…AAEALKKLKE (70 aa)).

It belongs to the ribonuclease III family. In terms of assembly, homodimer. Mg(2+) is required as a cofactor.

It is found in the cytoplasm. The enzyme catalyses Endonucleolytic cleavage to 5'-phosphomonoester.. Its function is as follows. Digests double-stranded RNA. Involved in the processing of primary rRNA transcript to yield the immediate precursors to the large and small rRNAs (23S and 16S). Processes some mRNAs, and tRNAs when they are encoded in the rRNA operon. Processes pre-crRNA and tracrRNA of type II CRISPR loci if present in the organism. This chain is Ribonuclease 3, found in Bacillus cereus (strain ATCC 14579 / DSM 31 / CCUG 7414 / JCM 2152 / NBRC 15305 / NCIMB 9373 / NCTC 2599 / NRRL B-3711).